A 735-amino-acid polypeptide reads, in one-letter code: Disintegrin and metalloproteinase domain-containing protein 2 (735 aa).

An N-terminal signal peptide occupies residues 1 to 15 (MLCLLLLLCGLASLG). The propeptide occupies 16-176 (GPLKKYVENS…KIKSIKSSVR (161 aa)). Topologically, residues 16-680 (GPLKKYVENS…EGAYHTKSRK (665 aa)) are extracellular. N-linked (GlcNAc...) asparagine glycans are attached at residues N55, N220, and N288. A Peptidase M12B domain is found at 178 to 375 (HYIEMHIIVE…QVSQCLQNQP (198 aa)). 4 disulfides stabilise this stretch: C287/C370, C329/C354, C331/C336, and C442/C455. N-linked (GlcNAc...) asparagine glycosylation occurs at N353. One can recognise a Disintegrin domain in the interval 384–470 (NPVCGNNRVE…ACQEDLYVIN (87 aa)). N456 and N564 each carry an N-linked (GlcNAc...) asparagine glycan. Residues 610–643 (LGYDCTPATCSDHGVCNNKRHCHCNPTYVPPNCE) enclose the EGF-like domain. Intrachain disulfides connect C614/C625, C619/C631, and C633/C642. A helical membrane pass occupies residues 681–701 (WPFFLIIPFFVIFSVLVATVV). Residues 702-735 (KVYYQKKKWKTEDYANDENIESESEPKSSKVSSK) lie on the Cytoplasmic side of the membrane. The disordered stretch occupies residues 716–735 (ANDENIESESEPKSSKVSSK). S723 is subject to Phosphoserine.

Heterodimer with ADAM1/fertilin subunit alpha. The signal and the metalloprotease domain are cleaved during the epididymal maturation of the spermatozoa. Expressed specifically in testis.

It is found in the membrane. In terms of biological role, sperm surface membrane protein that may be involved in sperm-egg plasma membrane adhesion and fusion during fertilization. Could have a direct role in sperm-zona binding or migration of sperm from the uterus into the oviduct. Interactions with egg membrane could be mediated via binding between its disintegrin-like domain to one or more integrins receptors on the egg. This is a non catalytic metalloprotease-like protein. The polypeptide is Disintegrin and metalloproteinase domain-containing protein 2 (ADAM2) (Cavia porcellus (Guinea pig)).